The sequence spans 200 residues: UPF0301 protein BOV_0485 (200 aa).

It belongs to the UPF0301 (AlgH) family.

The protein is UPF0301 protein BOV_0485 of Brucella ovis (strain ATCC 25840 / 63/290 / NCTC 10512).